Consider the following 927-residue polypeptide: Protein unc-45 homolog B (927 aa).

TPR repeat units follow at residues 4–37, 41–74, and 76–108; these read PVQL…ITDK, AVLY…DASD, and KALF…EPKN. ARM repeat units lie at residues 167–206, 209–248, and 746–785; these read DAGA…GMCT, RARA…NIVD, and DKLR…NLAV.

The protein localises to the cytoplasm. It localises to the myofibril. Its subcellular location is the sarcomere. It is found in the z line. The protein resides in the a band. The protein localises to the perinuclear region. It localises to the cytosol. In terms of biological role, acts as a co-chaperone for HSP90 and is required for proper folding of the myosin motor domain. Plays a role in sarcomere formation during muscle cell assembly. Is necessary for normal early lens development. The sequence is that of Protein unc-45 homolog B from Xenopus laevis (African clawed frog).